A 777-amino-acid polypeptide reads, in one-letter code: Androgen receptor (777 aa).

Positions 1–416 (MEVHIGLGGV…IDYYFPPQKP (416 aa)) are modulating. Disordered regions lie at residues 53–95 (CVHP…QAPQ), 110–132 (GEQG…YPES), and 205–241 (RRAG…LSEP). 2 consecutive NR C4-type zinc fingers follow at residues 417–434 (CLSC…ALTC) and 453–472 (CASR…CPSC). The segment at residues 417-489 (CLSCEDEASG…AGMTLGARKL (73 aa)) is a DNA-binding region (nuclear receptor). In terms of domain architecture, NR LBD spans 526–757 (SCQPIFLNVL…DFPEMMSEII (232 aa)). Residues asparagine 563, arginine 610, and threonine 735 each contribute to the 17beta-hydroxy-5alpha-androstan-3-one site.

Belongs to the nuclear hormone receptor family. NR3 subfamily. As to quaternary structure, binds DNA as a homodimer. Interacts via the ligand-binding domain with LXXLL and FXXLF motifs from coactivator proteins. Interacts (via ligand-binding domain) with TRIM68. Detected in somatic Leydig and Sertoli cells in testis with high level expression. Also detected at lower expression levels in forebrain and heart.

It is found in the nucleus. The protein resides in the cytoplasm. Steroid hormone receptors are ligand-activated transcription factors that regulate eukaryotic gene expression and affect cellular proliferation and differentiation in target tissues. Transcription factor activity is modulated by bound coactivator and corepressor proteins. The polypeptide is Androgen receptor (ar) (Aquarana catesbeiana (American bullfrog)).